We begin with the raw amino-acid sequence, 147 residues long: UPF0178 protein Tgr7_2584 (147 aa).

The protein belongs to the UPF0178 family.

The protein is UPF0178 protein Tgr7_2584 of Thioalkalivibrio sulfidiphilus (strain HL-EbGR7).